Reading from the N-terminus, the 228-residue chain is Probable septum site-determining protein MinC (228 aa).

The protein belongs to the MinC family. In terms of assembly, interacts with MinD and FtsZ.

Cell division inhibitor that blocks the formation of polar Z ring septums. Rapidly oscillates between the poles of the cell to destabilize FtsZ filaments that have formed before they mature into polar Z rings. Prevents FtsZ polymerization. This is Probable septum site-determining protein MinC from Symbiobacterium thermophilum (strain DSM 24528 / JCM 14929 / IAM 14863 / T).